A 1077-amino-acid chain; its full sequence is Error-prone DNA polymerase (1077 aa).

This sequence belongs to the DNA polymerase type-C family. DnaE2 subfamily.

The protein localises to the cytoplasm. The enzyme catalyses DNA(n) + a 2'-deoxyribonucleoside 5'-triphosphate = DNA(n+1) + diphosphate. Functionally, DNA polymerase involved in damage-induced mutagenesis and translesion synthesis (TLS). It is not the major replicative DNA polymerase. The sequence is that of Error-prone DNA polymerase from Brucella abortus biovar 1 (strain 9-941).